Here is a 414-residue protein sequence, read N- to C-terminus: WW domain-containing oxidoreductase (414 aa).

Positions 1–23 (MAALRYAGLDDTDSEDELPPGWE) are disordered. Threonine 12 is subject to Phosphothreonine. Residue serine 14 is modified to Phosphoserine. A WW 1 domain is found at 16 to 49 (DELPPGWEERTTKDGWVYYANHTEEKTQWEHPKT). The residue at position 33 (tyrosine 33) is a Phosphotyrosine. Residues 50–55 (GKRKRV) carry the Nuclear localization signal motif. A WW 2 domain is found at 57–90 (GDLPYGWEQETDENGQVFFVDHINKRTTYLDPRL). Residues 125–414 (KVVVVTGANS…IQERLGSQSG (290 aa)) form an interaction with MAPT region. 131–137 (GANSGIG) contacts NADP(+). The segment at 209 to 273 (CNAATFALPW…RFTDINDSLG (65 aa)) is mediates targeting to the mitochondria. Serine 260 lines the substrate pocket. The residue at position 287 (tyrosine 287) is a Phosphotyrosine; by TNK2. The active-site Proton acceptor is the tyrosine 293.

The protein belongs to the short-chain dehydrogenases/reductases (SDR) family. As to quaternary structure, interacts with TP53, p73/TP73 and MAPK8. Interacts with MAPT/TAU, RUNX2 and HYAL2. Forms a ternary complex with TP53 and MDM2. Interacts with ERBB4, LITAF and WBP1. Interacts with DVL1, DVL2 and DVL3. May interact with FAM189B and SCOTIN. Interacts with TNK2. Interacts with TMEM207. Interacts (via WW domain) with VOPP1. In terms of processing, phosphorylated upon genotoxic stress. Phosphorylation of Tyr-33 regulates interaction with TP53, TP73 and MAPK8. May also regulate proapoptotic activity. Phosphorylation by TNK2 is associated with polyubiquitination and degradation. Ubiquitinated when phosphorylated by TNK2, leading to its degradation. In terms of tissue distribution, widely expressed. Strongly expressed in testis, prostate, and ovary. Overexpressed in cancer cell lines. Isoform 5 and isoform 6 may only be expressed in tumor cell lines.

It is found in the cytoplasm. Its subcellular location is the nucleus. The protein localises to the mitochondrion. It localises to the golgi apparatus. The protein resides in the lysosome. In terms of biological role, putative oxidoreductase. Acts as a tumor suppressor and plays a role in apoptosis. Required for normal bone development. May function synergistically with p53/TP53 to control genotoxic stress-induced cell death. Plays a role in TGFB1 signaling and TGFB1-mediated cell death. May also play a role in tumor necrosis factor (TNF)-mediated cell death. Inhibits Wnt signaling, probably by sequestering DVL2 in the cytoplasm. The polypeptide is WW domain-containing oxidoreductase (WWOX) (Homo sapiens (Human)).